Consider the following 318-residue polypeptide: Aspartate carbamoyltransferase catalytic subunit (318 aa).

Arg-58 and Thr-59 together coordinate carbamoyl phosphate. Lys-86 is an L-aspartate binding site. Carbamoyl phosphate-binding residues include Arg-108, His-141, and Gln-144. Arg-174 and Arg-226 together coordinate L-aspartate. Carbamoyl phosphate-binding residues include Gly-270 and Pro-271.

It belongs to the aspartate/ornithine carbamoyltransferase superfamily. ATCase family. Heterododecamer (2C3:3R2) of six catalytic PyrB chains organized as two trimers (C3), and six regulatory PyrI chains organized as three dimers (R2).

The catalysed reaction is carbamoyl phosphate + L-aspartate = N-carbamoyl-L-aspartate + phosphate + H(+). It participates in pyrimidine metabolism; UMP biosynthesis via de novo pathway; (S)-dihydroorotate from bicarbonate: step 2/3. Its function is as follows. Catalyzes the condensation of carbamoyl phosphate and aspartate to form carbamoyl aspartate and inorganic phosphate, the committed step in the de novo pyrimidine nucleotide biosynthesis pathway. In Lactobacillus delbrueckii subsp. bulgaricus (strain ATCC 11842 / DSM 20081 / BCRC 10696 / JCM 1002 / NBRC 13953 / NCIMB 11778 / NCTC 12712 / WDCM 00102 / Lb 14), this protein is Aspartate carbamoyltransferase catalytic subunit.